A 334-amino-acid chain; its full sequence is Formamidase (334 aa).

The 247-residue stretch at 14-260 (MLMGLVQYPV…WEIVTAEVFP (247 aa)) folds into the CN hydrolase domain. Glu-60 serves as the catalytic Proton acceptor. Residue Lys-133 is the Proton donor of the active site. The active-site Nucleophile is Cys-166.

Belongs to the carbon-nitrogen hydrolase superfamily. Aliphatic amidase family.

The enzyme catalyses formamide + H2O = formate + NH4(+). In terms of biological role, is an aliphatic amidase with a restricted substrate specificity, as it only hydrolyzes formamide. The chain is Formamidase from Nitratidesulfovibrio vulgaris (strain DP4) (Desulfovibrio vulgaris).